Here is an 824-residue protein sequence, read N- to C-terminus: Fibroblast growth factor receptor 2 (824 aa).

Positions 1–21 (MFSWSYLMGLVMVATATLSLA) are cleaved as a signal peptide. Over 22 to 374 (RPSYNIAEDT…LDSSSSEYTE (353 aa)) the chain is Extracellular. Residues 25–125 (YNIAEDTTLE…ETRYFIVNIT (101 aa)) form the Ig-like C2-type 1 domain. C62 and C107 are joined by a disulfide. 3 N-linked (GlcNAc...) asparagine glycosylation sites follow: N83, N123, and N128. Positions 125 to 152 (TDGNSSGDDEDDNDGSEDFTNDNNHKRA) are disordered. Over residues 131 to 144 (GDDEDDNDGSEDFT) the composition is skewed to acidic residues. 2 Ig-like C2-type domains span residues 153-246 (PYWT…YHLD) and 254-356 (PPIL…AWLT). Positions 160 to 177 (KLEKKLHAVPAANTVKFR) are heparin-binding. A disulfide bond links C178 and C230. N-linked (GlcNAc...) asparagine glycosylation is found at N227, N240, N264, N295, N316, and N329. A disulfide bond links C277 and C340. A helical transmembrane segment spans residues 375-395 (IAIYCVGGFLIACMIGTIMMC). At 396–824 (HMKGRGKKSD…PLKHEATQPA (429 aa)) the chain is on the cytoplasmic side. Y463 is subject to Phosphotyrosine; by autocatalysis. The 290-residue stretch at 478–767 (LTLGKPLGEG…LTQTTNEEYL (290 aa)) folds into the Protein kinase domain. Residues 484 to 492 (LGEGCFGQV), K514, 562 to 564 (EYA), and N568 each bind ATP. Y583 carries the post-translational modification Phosphotyrosine; by autocatalysis. Residue D623 is the Proton acceptor of the active site. 3 positions are modified to phosphotyrosine; by autocatalysis: Y653, Y654, and Y766. The tract at residues 801 to 824 (SMNLAFPNPNTQMAPLKHEATQPA) is disordered.

The protein belongs to the protein kinase superfamily. Tyr protein kinase family. Fibroblast growth factor receptor subfamily. Monomer. Homodimer after ligand binding. In terms of processing, autophosphorylated. Binding of FGF family members together with heparan sulfate proteoglycan or heparin promotes receptor dimerization and autophosphorylation on tyrosine residues. Autophosphorylation occurs in trans between the two FGFR molecules present in the dimer. N-glycosylated in the endoplasmic reticulum. The N-glycan chains undergo further maturation to an Endo H-resistant form in the Golgi apparatus. Post-translationally, ubiquitinated. FGFR2 is rapidly ubiquitinated after autophosphorylation, leading to internalization and degradation. Subject to degradation both in lysosomes and by the proteasome.

Its subcellular location is the cell membrane. The protein resides in the golgi apparatus. It localises to the cytoplasmic vesicle. The enzyme catalyses L-tyrosyl-[protein] + ATP = O-phospho-L-tyrosyl-[protein] + ADP + H(+). With respect to regulation, present in an inactive conformation in the absence of bound ligand. Ligand binding leads to dimerization and activation by autophosphorylation on tyrosine residues. Functionally, tyrosine-protein kinase that acts as a cell-surface receptor for fibroblast growth factors and plays an essential role in the regulation of cell proliferation, differentiation, migration and apoptosis, and in the regulation of embryonic development. Required for normal embryonic patterning, limb bud development, lung morphogenesis, osteogenesis and skin development. Plays an essential role in the regulation of osteoblast differentiation, proliferation and apoptosis, and is required for normal skeleton development. Promotes cell proliferation in keratinocytes and immature osteoblasts, but promotes apoptosis in differentiated osteoblasts. Phosphorylates PLCG1, FRS2 and PAK4. Ligand binding leads to the activation of several signaling cascades. Activation of PLCG1 leads to the production of the cellular signaling molecules diacylglycerol and inositol 1,4,5-trisphosphate. Phosphorylation of FRS2 triggers recruitment of GRB2, GAB1, PIK3R1 and SOS1, and mediates activation of RAS, MAPK1/ERK2, MAPK3/ERK1 and the MAP kinase signaling pathway, as well as of the AKT1 signaling pathway. FGFR2 signaling is down-regulated by ubiquitination, internalization and degradation. Mutations that lead to constitutive kinase activation or impair normal FGFR2 maturation, internalization and degradation lead to aberrant signaling. Over-expressed FGFR2 promotes activation of STAT1. This chain is Fibroblast growth factor receptor 2 (FGFR2), found in Pleurodeles waltl (Iberian ribbed newt).